Consider the following 307-residue polypeptide: 4-diphosphocytidyl-2-C-methyl-D-erythritol kinase (307 aa).

Residue Lys16 is part of the active site. Residue Pro101–Ala111 participates in ATP binding. The active site involves Asp143.

This sequence belongs to the GHMP kinase family. IspE subfamily.

It catalyses the reaction 4-CDP-2-C-methyl-D-erythritol + ATP = 4-CDP-2-C-methyl-D-erythritol 2-phosphate + ADP + H(+). It functions in the pathway isoprenoid biosynthesis; isopentenyl diphosphate biosynthesis via DXP pathway; isopentenyl diphosphate from 1-deoxy-D-xylulose 5-phosphate: step 3/6. Functionally, catalyzes the phosphorylation of the position 2 hydroxy group of 4-diphosphocytidyl-2C-methyl-D-erythritol. This chain is 4-diphosphocytidyl-2-C-methyl-D-erythritol kinase, found in Nocardia farcinica (strain IFM 10152).